Reading from the N-terminus, the 534-residue chain is Cysteine/serine-rich nuclear protein 2 (534 aa).

M1 bears the N-acetylmethionine mark. Disordered regions lie at residues 1–52 and 480–534; these read MDAF…FTPT and DCGL…PLAV. A compositionally biased stretch (low complexity) spans 31–40; that stretch reads SSDSADSCDS. The segment covering 42 to 52 has biased composition (polar residues); sequence NPPTTASFTPT. The segment covering 480–492 has biased composition (basic and acidic residues); sequence DCGLKEPESEDLH.

This sequence belongs to the AXUD1 family. As to expression, highest expression detected in thymus, brain and ovary. Low levels detected in naive T-cells.

Its subcellular location is the nucleus. Its function is as follows. Binds to the consensus sequence 5'-AGAGTG-3' and has transcriptional activator activity. May play a role in apoptosis. The protein is Cysteine/serine-rich nuclear protein 2 (Csrnp2) of Mus musculus (Mouse).